The chain runs to 521 residues: Probable protein phosphatase 2C 16 (521 aa).

Residues 21–327 (KYVVSSMQGW…ENTTVILVQF (307 aa)) form the PPM-type phosphatase domain. Mn(2+) is bound by residues Asp-57, Gly-58, Gln-276, and Glu-318. A disordered region spans residues 354–431 (AAPAGASDTS…ADADDGAPKP (78 aa)).

The protein belongs to the PP2C family. The cofactor is Mg(2+). Mn(2+) is required as a cofactor.

The catalysed reaction is O-phospho-L-seryl-[protein] + H2O = L-seryl-[protein] + phosphate. The enzyme catalyses O-phospho-L-threonyl-[protein] + H2O = L-threonyl-[protein] + phosphate. This chain is Probable protein phosphatase 2C 16, found in Oryza sativa subsp. japonica (Rice).